The chain runs to 372 residues: Chaperone protein DnaJ (372 aa).

In terms of domain architecture, J spans 5-70; the sequence is DYYELLEISR…EKKSIYDRYG (66 aa). Residues 134 to 211 form a CR-type zinc finger; the sequence is GCNKEINYKY…CKGTGYEEVK (78 aa). The Zn(2+) site is built by Cys147, Cys150, Cys163, Cys166, Cys185, Cys188, Cys199, and Cys202. CXXCXGXG motif repeat units follow at residues 147–154, 163–170, 185–192, and 199–206; these read CKPCEGTG, CPTCKGQG, CPRCGGTG, and CKSCKGTG.

This sequence belongs to the DnaJ family. In terms of assembly, homodimer. Zn(2+) is required as a cofactor.

Its subcellular location is the cytoplasm. Participates actively in the response to hyperosmotic and heat shock by preventing the aggregation of stress-denatured proteins and by disaggregating proteins, also in an autonomous, DnaK-independent fashion. Unfolded proteins bind initially to DnaJ; upon interaction with the DnaJ-bound protein, DnaK hydrolyzes its bound ATP, resulting in the formation of a stable complex. GrpE releases ADP from DnaK; ATP binding to DnaK triggers the release of the substrate protein, thus completing the reaction cycle. Several rounds of ATP-dependent interactions between DnaJ, DnaK and GrpE are required for fully efficient folding. Also involved, together with DnaK and GrpE, in the DNA replication of plasmids through activation of initiation proteins. The protein is Chaperone protein DnaJ of Aliarcobacter butzleri (strain RM4018) (Arcobacter butzleri).